Consider the following 410-residue polypeptide: Phosphoglycerate kinase (410 aa).

Residues 19–21 (DLN), Arg34, 57–60 (HQGK), Arg114, and Arg154 contribute to the substrate site. ATP is bound by residues Glu332 and 358–361 (GGHS).

The protein belongs to the phosphoglycerate kinase family. Homodimer.

It localises to the cytoplasm. It catalyses the reaction (2R)-3-phosphoglycerate + ATP = (2R)-3-phospho-glyceroyl phosphate + ADP. The protein operates within carbohydrate degradation; glycolysis; pyruvate from D-glyceraldehyde 3-phosphate: step 2/5. The protein is Phosphoglycerate kinase (pgk) of Pyrococcus furiosus (strain ATCC 43587 / DSM 3638 / JCM 8422 / Vc1).